The following is a 363-amino-acid chain: Protein-arginine kinase (363 aa).

Residues isoleucine 24–alanine 255 form the Phosphagen kinase C-terminal domain. Residues serine 27–arginine 31, histidine 92, arginine 126, arginine 177–methionine 181, and arginine 208–glutamate 213 contribute to the ATP site. Residues arginine 338–alanine 343 carry the RDXXRA motif of the pArg binding pocket involved in allosteric regulation motif.

It belongs to the ATP:guanido phosphotransferase family. Homodimer. Dimerization is important for full catalytic activity.

It carries out the reaction L-arginyl-[protein] + ATP = N(omega)-phospho-L-arginyl-[protein] + ADP + H(+). Appears to be allosterically activated by the binding of pArg-containing polypeptides to the pArg-binding pocket localized in the C-terminal domain of McsB. Its function is as follows. Catalyzes the specific phosphorylation of arginine residues in a large number of proteins. Is part of the bacterial stress response system, where it is involved in regulating the global heat shock repressor CtsR; phosphorylates arginine residues in the winged helix-turn-helix domain of CtsR, thereby preventing its binding to DNA and consequently inducing the expression of repressed genes. Protein arginine phosphorylation has a physiologically important role and is involved in the regulation of many critical cellular processes, such as protein homeostasis, motility, competence, and stringent and stress responses, by regulating gene expression and protein activity. Acts exclusively on Arg residues, since it cannot phosphorylate Tyr, Ser, Thr, His, Asp and Lys. Has no free arginine kinase activity. The protein is Protein-arginine kinase of Geobacillus stearothermophilus (Bacillus stearothermophilus).